The sequence spans 335 residues: Acetyl-coenzyme A carboxylase carboxyl transferase subunit alpha (335 aa).

The region spanning glutamine 40–alanine 294 is the CoA carboxyltransferase C-terminal domain.

The protein belongs to the AccA family. In terms of assembly, acetyl-CoA carboxylase is a heterohexamer composed of biotin carboxyl carrier protein (AccB), biotin carboxylase (AccC) and two subunits each of ACCase subunit alpha (AccA) and ACCase subunit beta (AccD).

Its subcellular location is the cytoplasm. It catalyses the reaction N(6)-carboxybiotinyl-L-lysyl-[protein] + acetyl-CoA = N(6)-biotinyl-L-lysyl-[protein] + malonyl-CoA. The protein operates within lipid metabolism; malonyl-CoA biosynthesis; malonyl-CoA from acetyl-CoA: step 1/1. Its function is as follows. Component of the acetyl coenzyme A carboxylase (ACC) complex. First, biotin carboxylase catalyzes the carboxylation of biotin on its carrier protein (BCCP) and then the CO(2) group is transferred by the carboxyltransferase to acetyl-CoA to form malonyl-CoA. The polypeptide is Acetyl-coenzyme A carboxylase carboxyl transferase subunit alpha (Prochlorococcus marinus (strain AS9601)).